The primary structure comprises 237 residues: Octopine transport system permease protein OccQ (237 aa).

The region spanning 22–222 (TGMTVAVASS…LITFISGQAF (201 aa)) is the ABC transmembrane type-1 domain. Transmembrane regions (helical) follow at residues 24-44 (MTVA…CLGA), 72-92 (LVIY…GSLF), 96-116 (GFVS…VSAA), and 201-221 (FSFY…SGQA).

The protein belongs to the binding-protein-dependent transport system permease family. HisMQ subfamily.

The protein localises to the cell inner membrane. Functionally, component of the octopine active transport system probably consisting of four subunits: Q, M, P and T. This chain is Octopine transport system permease protein OccQ (occQ), found in Rhizobium meliloti (Ensifer meliloti).